Here is a 324-residue protein sequence, read N- to C-terminus: UDP-N-acetylenolpyruvoylglucosamine reductase (324 aa).

Residues 36-203 enclose the FAD-binding PCMH-type domain; the sequence is FRAGGLAELM…TSVLFEGYPE (168 aa). The active site involves Arg-183. The active-site Proton donor is the Ser-232. The active site involves Glu-302.

This sequence belongs to the MurB family. FAD is required as a cofactor.

Its subcellular location is the cytoplasm. It catalyses the reaction UDP-N-acetyl-alpha-D-muramate + NADP(+) = UDP-N-acetyl-3-O-(1-carboxyvinyl)-alpha-D-glucosamine + NADPH + H(+). It functions in the pathway cell wall biogenesis; peptidoglycan biosynthesis. Cell wall formation. The protein is UDP-N-acetylenolpyruvoylglucosamine reductase of Rhizobium etli (strain CIAT 652).